A 1194-amino-acid chain; its full sequence is ATP-dependent RNA helicase DHX30 (1194 aa).

Positions 1 to 10 are enriched in basic and acidic residues; that stretch reads MFTLDSFRKD. The segment at 1–27 is disordered; that stretch reads MFTLDSFRKDRTQHRQRQCKLPPPRLP. Serine 6 is subject to Phosphoserine. Positions 53–121 constitute a DRBM domain; it reads PKNLLNSVIG…QAAAAACQLF (69 aa). Positions 153-200 are disordered; that stretch reads WWRPEPTMPPTSWRQLNPENIRPAGTGGLSRSLGREEEEDEEEELEEG. Residues 188-200 show a composition bias toward acidic residues; that stretch reads EEEEDEEEELEEG. 2 positions are modified to phosphoserine: serine 226 and serine 380. One can recognise a Helicase ATP-binding domain in the interval 444-612; the sequence is LSAIEQHPVV…FGGCPVIKVP (169 aa). 457–464 is a binding site for ATP; sequence GDTGCGKT. A DEAH box motif is present at residues 559-562; that stretch reads DEVH. The 174-residue stretch at 654-827 folds into the Helicase C-terminal domain; it reads LVTDLVLHID…NLVLQAKIHM (174 aa).

Belongs to the DEAD box helicase family. DEAH subfamily. Identified in a complex with TFAM and SSBP1. Interacts (via N-terminus) with ZC3HAV1 (via N-terminal domain) in an RNA-independent manner. Found in a complex with GRSF1, DDX28, FASTKD2 and FASTKD5.

Its subcellular location is the cytoplasm. The protein localises to the mitochondrion. The protein resides in the mitochondrion matrix. It is found in the mitochondrion nucleoid. The catalysed reaction is ATP + H2O = ADP + phosphate + H(+). In terms of biological role, RNA-dependent helicase. Plays an important role in the assembly of the mitochondrial large ribosomal subunit. Associates with mitochondrial DNA. Required for optimal function of the zinc-finger antiviral protein ZC3HAV1. Involved in nervous system development and differentiation through its involvement in the up-regulation of a number of genes which are required for neurogenesis, including GSC, NCAM1, neurogenin, and NEUROD. This is ATP-dependent RNA helicase DHX30 (Dhx30) from Rattus norvegicus (Rat).